We begin with the raw amino-acid sequence, 533 residues long: MQTKETTNEGLKRAYKLTLTAKEIDAKIDAEVKKVAPQVRMPGFRPGKVPANLVRKMHGEQMHAQVINDSIRDSVDALIKEKELRPAMQPKIDLNEDYEQGKDAVVSVSLEILPKVEAPSIDDLKLERLTVPVSDEQVMETIERIAGQNKSYKDAAKTRKAADGDQLIIDFTGSVDGVEFEGGKAEDAPLVLGSGTFIPGFEEQLKGVKTGDEKTITVTFPKDYQAENLAGKEAQFDVKVKQVKVETDTTIDDEFAANLGLENLDKLKELIRGQLEQETNGLTRTAMKRSLLDQLAAGHDFPVPEGMVDAEFEQIWNQLQQEAAQEEDPDKALKEIEAEKDDYRAIAERRVRLGLLLSEIGQANGVEISQQEMSMLTMQAAQQYREEDRERFMQFIQQDPMAAAQLRAPLYEDKVVDFLFDKAEVTDREVTREELEAAIEAEAEEEKKPAAKKKAPAKKAEPKKAAAKKAPAKKAPAKKAAAKDGDEKPAAKKAPAKKAPAKKASTKKPAEKKAPAKKPAAKKAPAKKPAAKK.

Residues 164-249 enclose the PPIase FKBP-type domain; sequence GDQLIIDFTG…VKQVKVETDT (86 aa). The segment at 436–533 is disordered; the sequence is EAAIEAEAEE…APAKKPAAKK (98 aa). Over residues 465–477 the composition is skewed to basic residues; the sequence is AAAKKAPAKKAPA. Residues 481–490 are compositionally biased toward basic and acidic residues; sequence AAKDGDEKPA. 2 stretches are compositionally biased toward basic residues: residues 494–506 and 515–533; these read APAK…KAST and PAKK…AAKK.

Belongs to the FKBP-type PPIase family. Tig subfamily.

It localises to the cytoplasm. It carries out the reaction [protein]-peptidylproline (omega=180) = [protein]-peptidylproline (omega=0). Functionally, involved in protein export. Acts as a chaperone by maintaining the newly synthesized protein in an open conformation. Functions as a peptidyl-prolyl cis-trans isomerase. The chain is Trigger factor from Erythrobacter litoralis (strain HTCC2594).